We begin with the raw amino-acid sequence, 102 residues long: Large ribosomal subunit protein P1 (102 aa).

Positions 69-91 are disordered; the sequence is APAAAAEEKKEEEKKEEKKEEDT. A compositionally biased stretch (basic and acidic residues) spans 74–90; sequence AEEKKEEEKKEEKKEED.

It belongs to the eukaryotic ribosomal protein P1/P2 family. In terms of assembly, part of the 50S ribosomal subunit. Homodimer, it forms part of the ribosomal stalk which helps the ribosome interact with GTP-bound translation factors. Forms a heptameric uL10/P0(P1)2(P1)2(P1)2 complex, where uL10/P0 forms an elongated spine to which the P1 dimers bind in a sequential fashion.

Functionally, forms part of the ribosomal stalk, playing a central role in the interaction of the ribosome with GTP-bound translation factors. The protein is Large ribosomal subunit protein P1 of Methanocaldococcus jannaschii (strain ATCC 43067 / DSM 2661 / JAL-1 / JCM 10045 / NBRC 100440) (Methanococcus jannaschii).